The sequence spans 428 residues: D-amino acid dehydrogenase (428 aa).

3–17 (VVILGSGVVGVASAY) is an FAD binding site.

Belongs to the DadA oxidoreductase family. FAD serves as cofactor.

It carries out the reaction a D-alpha-amino acid + A + H2O = a 2-oxocarboxylate + AH2 + NH4(+). Its pathway is amino-acid degradation; D-alanine degradation; NH(3) and pyruvate from D-alanine: step 1/1. Its function is as follows. Oxidative deamination of D-amino acids. The protein is D-amino acid dehydrogenase of Burkholderia multivorans (strain ATCC 17616 / 249).